Here is a 452-residue protein sequence, read N- to C-terminus: Cobyrinate a,c-diamide synthase (452 aa).

In terms of domain architecture, GATase cobBQ-type spans 246-439; it reads TLAYALDDAF…LHVHFYQDEQ (194 aa). The active-site Nucleophile is C328.

Belongs to the CobB/CbiA family. Mg(2+) serves as cofactor.

The enzyme catalyses cob(II)yrinate + 2 L-glutamine + 2 ATP + 2 H2O = cob(II)yrinate a,c diamide + 2 L-glutamate + 2 ADP + 2 phosphate + 2 H(+). The protein operates within cofactor biosynthesis; adenosylcobalamin biosynthesis; cob(II)yrinate a,c-diamide from sirohydrochlorin (anaerobic route): step 10/10. In terms of biological role, catalyzes the ATP-dependent amidation of the two carboxylate groups at positions a and c of cobyrinate, using either L-glutamine or ammonia as the nitrogen source. In Streptococcus sanguinis (strain SK36), this protein is Cobyrinate a,c-diamide synthase.